Here is a 796-residue protein sequence, read N- to C-terminus: Armadillo repeat-containing protein wrm-1 (796 aa).

The tract at residues 17–59 (NFNPMTPSTSRVSTPVRPSSTMSARQYSGSPFKAQPQNMEPSN) is disordered. Residues 462–504 (ESIHCIVQLIGCSDVTIVELATGTLRNIGLHNKMNKAFMVQDG) form an ARM repeat.

Interacts (independently of ARM repeat) with nhr-25. Component of the beta-catenin-lit-1 complex (also called the lit-1/wrm-1 complex or the wrm-1/lit-1 kinase complex) at least composed of lit-1 and wrm-1. Interacts (via N-terminus) with lit-1; the interaction is direct and activates lit-1 kinase activity which leads to the phosphorylation of pop-1. This promotes pop-1 interaction with par-5 and translocation of pop-1 from the nucleus to the cytoplasm.

It localises to the cytoplasm. Its subcellular location is the cell cortex. It is found in the nucleus. Antagonistic role in the Wnt signaling pathway that operates in embryogenesis. When located at the cortex it has been shown to inhibit Wnt signaling during asymmetric cell division but when relocated to the nucleus it shows positive regulation. Has a role in blastomere signaling during endoderm specification. Component of the beta-catenin-lit-1 complex which promotes phosphorylation, down-regulation and subcellular relocation of pop-1. Within the complex, activates lit-1-dependent kinase activity. Can substitute for bar-1 indicating functional redundancy. Appears to have a role in centrosome positioning and can activation transcription in yeast. Involved in the development of distal tip cells (DTC) by regulating the asymmetric distribution of cye-1 and cki-1 between the daughters of Z1.a and Z4.p cells. The sequence is that of Armadillo repeat-containing protein wrm-1 from Caenorhabditis elegans.